The primary structure comprises 1317 residues: Toxin protein Tse5 (1317 aa).

Residues 395–419 (GRETRRRRDGQGRMLEEESPGKARY) form a disordered region. A compositionally biased stretch (basic and acidic residues) spans 403 to 415 (DGQGRMLEEESPG).

Toxin secreted by the H1 type VI (H1-T6SS) secretion system that acts on bacterial target cells. The producing bacterium is protected by a cognate immunity protein. The chain is Toxin protein Tse5 from Pseudomonas aeruginosa (strain ATCC 15692 / DSM 22644 / CIP 104116 / JCM 14847 / LMG 12228 / 1C / PRS 101 / PAO1).